The sequence spans 309 residues: Dicarboxylate carrier UCP2 (309 aa).

The Mitochondrial intermembrane portion of the chain corresponds to 1-16; it reads MVGFKATDVPPTATVK. 3 Solcar repeats span residues 11-106, 114-203, and 212-297; these read PTAT…VKQF, AGIG…IKDT, and DDLP…LKRA. Positions 16–63 are important for interaction with long-chain fatty acids; the sequence is KFLGAGTAACIADLITFPLDTAKVRLQIQGESQGLVRTAASAQYRGVL. Residues 17-40 traverse the membrane as a helical segment; it reads FLGAGTAACIADLITFPLDTAKVR. At 41 to 77 the chain is on the mitochondrial matrix side; it reads LQIQGESQGLVRTAASAQYRGVLGTILTMVRTEGPRS. A helical transmembrane segment spans residues 78 to 103; it reads LYNGLVAGLQRQMSFASVRIGLYDSV. Topologically, residues 104–119 are mitochondrial intermembrane; that stretch reads KQFYTKGSEHAGIGSR. A helical membrane pass occupies residues 120-145; that stretch reads LLAGSTTGALAVAVAQPTDVVKVRFQ. At 146–173 the chain is on the mitochondrial matrix side; sequence AQARAGGGRRYQSTVEAYKTIAREEGIR. Residues 174–199 traverse the membrane as a helical segment; sequence GLWKGTSPNVARNAIVNCAELVTYDL. Over 200–217 the chain is Mitochondrial intermembrane; sequence IKDTLLKANLMTDDLPCH. A helical transmembrane segment spans residues 218–242; that stretch reads FTSAFGAGFCTTVIASPVDVVKTRY. The Mitochondrial matrix segment spans residues 243–268; it reads MNSALGQYHSAGHCALTMLRKEGPRA. Residues 269-294 traverse the membrane as a helical segment; that stretch reads FYKGFMPSFLRLGSWNVVMFVTYEQL. The tract at residues 278–285 is important for interaction with long-chain fatty acids; sequence LRLGSWNV. Over 295-309 the chain is Mitochondrial intermembrane; it reads KRALMAAYQSREAPF.

The protein belongs to the mitochondrial carrier (TC 2.A.29) family. Homotetramer. Adopts an asymmetrical dimer of dimers functional form. Interacts with MICU1 (when methylated); leading to decrease the calcium sensitivity of MICU1. Widely expressed. Highest in spleen, lung, white and brown adipose tissues. 4-6 times higher levels are detected in white adipose tissue of ob/ob and db/db mice when compared to lean littermates. Expressed in neurons of the ventromedial nucleus of the hypothalamus (at protein level). Expressed in thymocytes (at protein level).

The protein resides in the mitochondrion inner membrane. The catalysed reaction is L-aspartate(out) + phosphate(in) + H(+)(in) = L-aspartate(in) + phosphate(out) + H(+)(out). It catalyses the reaction oxaloacetate(out) + phosphate(in) + H(+)(in) = oxaloacetate(in) + phosphate(out) + H(+)(out). The enzyme catalyses (S)-malate(out) + phosphate(in) + H(+)(in) = (S)-malate(in) + phosphate(out) + H(+)(out). It carries out the reaction malonate(out) + phosphate(in) + H(+)(in) = malonate(in) + phosphate(out) + H(+)(out). The catalysed reaction is sulfate(out) + phosphate(in) + H(+)(in) = sulfate(in) + phosphate(out) + H(+)(out). It catalyses the reaction (S)-malate(out) = (S)-malate(in). The enzyme catalyses L-aspartate(out) = L-aspartate(in). It carries out the reaction phosphate(in) = phosphate(out). The catalysed reaction is chloride(in) = chloride(out). It catalyses the reaction H(+)(in) = H(+)(out). The enzyme catalyses a long-chain fatty acid(out) = a long-chain fatty acid(in). Proton conductance is activated by free long-chain fatty acids and allosterically inhibited by purine nucleotides. Could be constitutively inhibited by GDP. Its function is as follows. Antiporter that exports dicarboxylate intermediates of the Krebs cycle in exchange for phosphate plus a proton across the inner membrane of mitochondria, a process driven by mitochondrial motive force with an overall impact on glycolysis, glutaminolysis and glutathione-dependent redox balance. Continuous export of oxaloacetate and related four-carbon dicarboxylates from mitochondrial matrix into the cytosol negatively regulates the oxidation of acetyl-CoA substrates via the Krebs cycle lowering the ATP/ADP ratio and reactive oxygen species (ROS) production. May mediate inducible proton entry into the mitochondrial matrix affecting ATP turnover as a protection mechanism against oxidative stress. The proton currents are most likely associated with fatty acid flipping across the inner membrane of mitochondria in a metabolic process regulated by free fatty acids and purine nucleotides. Regulates the use of glucose as a source of energy. Required for glucose-induced DRP1-dependent mitochondrial fission and neuron activation in the ventromedial nucleus of the hypothalamus (VMH). This mitochondrial adaptation mechanism modulates the VMH pool of glucose-excited neurons with an impact on systemic glucose homeostasis. Regulates ROS levels and metabolic reprogramming of macrophages during the resolution phase of inflammation. Attenuates ROS production in response to IL33 to preserve the integrity of the Krebs cycle required for persistent production of itaconate and subsequent GATA3-dependent differentiation of inflammation-resolving alternatively activated macrophages. Can unidirectionally transport anions including L-malate, L-aspartate, phosphate and chloride ions. Does not mediate adaptive thermogenesis. This chain is Dicarboxylate carrier UCP2 (Ucp2), found in Mus musculus (Mouse).